The sequence spans 349 residues: Anthranilate phosphoribosyltransferase (349 aa).

5-phospho-alpha-D-ribose 1-diphosphate-binding positions include G87, 90–91 (GD), T95, 97–100 (NIST), 115–123 (KHGNRSVSS), and S127. G87 is an anthranilate binding site. Residue S99 participates in Mg(2+) binding. N118 is a binding site for anthranilate. Residue R173 coordinates anthranilate. Mg(2+) is bound by residues D231 and E232.

Belongs to the anthranilate phosphoribosyltransferase family. Homodimer. Mg(2+) is required as a cofactor.

It catalyses the reaction N-(5-phospho-beta-D-ribosyl)anthranilate + diphosphate = 5-phospho-alpha-D-ribose 1-diphosphate + anthranilate. Its pathway is amino-acid biosynthesis; L-tryptophan biosynthesis; L-tryptophan from chorismate: step 2/5. Its function is as follows. Catalyzes the transfer of the phosphoribosyl group of 5-phosphorylribose-1-pyrophosphate (PRPP) to anthranilate to yield N-(5'-phosphoribosyl)-anthranilate (PRA). This chain is Anthranilate phosphoribosyltransferase, found in Shewanella loihica (strain ATCC BAA-1088 / PV-4).